Consider the following 473-residue polypeptide: Chaperone SurA (473 aa).

Positions 1-36 are cleaved as a signal peptide; sequence MTNDRLFAGIARVLSVRPLAAALALLLTLPLIGVQA. PpiC domains follow at residues 214–315 and 326–425; these read SLAL…KVIE and ITQT…QVLE.

The protein resides in the periplasm. The enzyme catalyses [protein]-peptidylproline (omega=180) = [protein]-peptidylproline (omega=0). Chaperone involved in the correct folding and assembly of outer membrane proteins. Recognizes specific patterns of aromatic residues and the orientation of their side chains, which are found more frequently in integral outer membrane proteins. May act in both early periplasmic and late outer membrane-associated steps of protein maturation. The polypeptide is Chaperone SurA (Polaromonas sp. (strain JS666 / ATCC BAA-500)).